A 431-amino-acid polypeptide reads, in one-letter code: Enolase (431 aa).

A (2R)-2-phosphoglycerate-binding site is contributed by Gln-167. The Proton donor role is filled by Glu-209. 3 residues coordinate Mg(2+): Asp-246, Glu-290, and Asp-317. (2R)-2-phosphoglycerate contacts are provided by Lys-342, Arg-371, Ser-372, and Lys-393. The Proton acceptor role is filled by Lys-342.

The protein belongs to the enolase family. As to quaternary structure, component of the RNA degradosome, a multiprotein complex involved in RNA processing and mRNA degradation. The cofactor is Mg(2+).

It localises to the cytoplasm. The protein resides in the secreted. Its subcellular location is the cell surface. It catalyses the reaction (2R)-2-phosphoglycerate = phosphoenolpyruvate + H2O. It participates in carbohydrate degradation; glycolysis; pyruvate from D-glyceraldehyde 3-phosphate: step 4/5. Catalyzes the reversible conversion of 2-phosphoglycerate (2-PG) into phosphoenolpyruvate (PEP). It is essential for the degradation of carbohydrates via glycolysis. The chain is Enolase from Enterobacter sp. (strain 638).